A 771-amino-acid chain; its full sequence is Chaperone protein dnaK3 (771 aa).

Thr-198 carries the phosphothreonine; by autocatalysis modification. The segment at 624-771 (FDDDDDYYNR…GWDDDDDDWF (148 aa)) is disordered. Basic and acidic residues-rich tracts occupy residues 630–652 (YYNR…RYDD) and 708–734 (YDDR…RENA).

This sequence belongs to the heat shock protein 70 family.

Its function is as follows. Acts as a chaperone. This is Chaperone protein dnaK3 (dnaK3) from Synechocystis sp. (strain ATCC 27184 / PCC 6803 / Kazusa).